Consider the following 457-residue polypeptide: tRNA modification GTPase MnmE (457 aa).

Residues Arg25, Glu87, and Arg126 each contribute to the (6S)-5-formyl-5,6,7,8-tetrahydrofolate site. One can recognise a TrmE-type G domain in the interval 223-377 (GISTAIIGRP…IEERINQLFF (155 aa)). Asn233 provides a ligand contact to K(+). Residues 233 to 238 (NVGKSS), 252 to 258 (TDIAGTT), and 277 to 280 (DTAG) each bind GTP. Ser237 contributes to the Mg(2+) binding site. Thr252, Ile254, and Thr257 together coordinate K(+). Mg(2+) is bound at residue Thr258. A (6S)-5-formyl-5,6,7,8-tetrahydrofolate-binding site is contributed by Lys457.

This sequence belongs to the TRAFAC class TrmE-Era-EngA-EngB-Septin-like GTPase superfamily. TrmE GTPase family. In terms of assembly, homodimer. Heterotetramer of two MnmE and two MnmG subunits. It depends on K(+) as a cofactor.

The protein resides in the cytoplasm. Its function is as follows. Exhibits a very high intrinsic GTPase hydrolysis rate. Involved in the addition of a carboxymethylaminomethyl (cmnm) group at the wobble position (U34) of certain tRNAs, forming tRNA-cmnm(5)s(2)U34. This is tRNA modification GTPase MnmE from Streptococcus gordonii (strain Challis / ATCC 35105 / BCRC 15272 / CH1 / DL1 / V288).